The primary structure comprises 29 residues: uncharacterized protein (29 aa).

A helical membrane pass occupies residues 8-28; it reads FALIVVLFILLIIVGTAFVGG.

This sequence belongs to the SscA family.

The protein resides in the membrane. This is an uncharacterized protein from Bacillus subtilis (strain 168).